The following is a 631-amino-acid chain: 1-deoxy-D-xylulose-5-phosphate synthase (631 aa).

Thiamine diphosphate is bound by residues His87 and 128-130; that span reads GHS. Asp159 is a Mg(2+) binding site. Thiamine diphosphate is bound by residues 160-161, Asn188, Phe295, and Glu377; that span reads GA. Residue Asn188 coordinates Mg(2+).

This sequence belongs to the transketolase family. DXPS subfamily. Homodimer. Requires Mg(2+) as cofactor. The cofactor is thiamine diphosphate.

The catalysed reaction is D-glyceraldehyde 3-phosphate + pyruvate + H(+) = 1-deoxy-D-xylulose 5-phosphate + CO2. It functions in the pathway metabolic intermediate biosynthesis; 1-deoxy-D-xylulose 5-phosphate biosynthesis; 1-deoxy-D-xylulose 5-phosphate from D-glyceraldehyde 3-phosphate and pyruvate: step 1/1. Catalyzes the acyloin condensation reaction between C atoms 2 and 3 of pyruvate and glyceraldehyde 3-phosphate to yield 1-deoxy-D-xylulose-5-phosphate (DXP). The sequence is that of 1-deoxy-D-xylulose-5-phosphate synthase from Pseudomonas putida (strain ATCC 47054 / DSM 6125 / CFBP 8728 / NCIMB 11950 / KT2440).